We begin with the raw amino-acid sequence, 59 residues long: Cecropin-B2 (59 aa).

A signal peptide spans 1 to 23 (MNFNKLFLIVILAALLLLGQTEA). Position 57 is a leucine amide (leucine 57).

It belongs to the cecropin family.

The protein resides in the secreted. In terms of biological role, cecropins have lytic and antibacterial activity against several Gram-positive and Gram-negative bacteria. This is Cecropin-B2 (CECB2) from Culex pipiens pipiens (Northern house mosquito).